The sequence spans 98 residues: DNA-binding protein Fis (98 aa).

A DNA-binding region (H-T-H motif) is located at residues 74-93 (QTRAATMLGINRGTLRKKLK).

The protein belongs to the transcriptional regulatory Fis family. As to quaternary structure, homodimer.

In terms of biological role, activates ribosomal RNA transcription. Plays a direct role in upstream activation of rRNA promoters. This chain is DNA-binding protein Fis, found in Haemophilus ducreyi (strain 35000HP / ATCC 700724).